The chain runs to 274 residues: 5'-nucleotidase SurE (274 aa).

Residues Asp-12, Asp-13, Ser-45, and Asn-103 each coordinate a divalent metal cation.

Belongs to the SurE nucleotidase family. Requires a divalent metal cation as cofactor.

It is found in the cytoplasm. It carries out the reaction a ribonucleoside 5'-phosphate + H2O = a ribonucleoside + phosphate. Nucleotidase that shows phosphatase activity on nucleoside 5'-monophosphates. This Chlamydia felis (strain Fe/C-56) (Chlamydophila felis) protein is 5'-nucleotidase SurE.